The sequence spans 279 residues: MQYQHDSLDKLKLGQQTQYASNYDHTLLQPVPRHLNRDTLGITHTQPFHFGADIWTAYEISWLNLNGLPQVAIADVAIDFQSENLIESKSFKLYLNSFNQSKFATFEEVQQHLTQDLSNCAKGKVSVKLHPLSKYCHEPIVELAGECIDQQDIEINDYQFNPEILTNCTHDQMVKESLVSHLLKSNCLITNQPDWGTLQIRYEGKQIDREKLLRYIISFRQHNEFHEQCVERIFCDLMQFAKPDKLTVYARYTRRGGLDINPFRSNFEAVPDNQRLARQ.

Substrate is bound at residue 86 to 88 (IES). 88-89 (SK) serves as a coordination point for NADPH. The Thioimide intermediate role is filled by cysteine 187. The active-site Proton donor is the aspartate 194. 226–227 (HE) is a binding site for substrate. 255-256 (RG) is a binding site for NADPH.

It belongs to the GTP cyclohydrolase I family. QueF type 2 subfamily. As to quaternary structure, homodimer.

The protein localises to the cytoplasm. The enzyme catalyses 7-aminomethyl-7-carbaguanine + 2 NADP(+) = 7-cyano-7-deazaguanine + 2 NADPH + 3 H(+). It participates in tRNA modification; tRNA-queuosine biosynthesis. Catalyzes the NADPH-dependent reduction of 7-cyano-7-deazaguanine (preQ0) to 7-aminomethyl-7-deazaguanine (preQ1). This chain is NADPH-dependent 7-cyano-7-deazaguanine reductase, found in Pasteurella multocida (strain Pm70).